A 158-amino-acid polypeptide reads, in one-letter code: C-type lectin lectoxin-Thr1 (158 aa).

The N-terminal stretch at 1–23 (MGRFIFATLGLLLVAFSINGAKG) is a signal peptide. Cystine bridges form between cysteine 26/cysteine 37, cysteine 54/cysteine 154, and cysteine 129/cysteine 146. The 123-residue stretch at 33 to 155 (LKGFCYKVFN…CASTRAYLCK (123 aa)) folds into the C-type lectin domain. The Mannose-binding motif lies at 119–121 (EPN). Glutamate 127, asparagine 142, and aspartate 143 together coordinate Ca(2+).

This sequence belongs to the true venom lectin family. As to expression, expressed by the venom gland.

It localises to the secreted. Its function is as follows. Mannose-binding lectin which recognizes specific carbohydrate structures and agglutinates a variety of animal cells by binding to cell-surface glycoproteins and glycolipids. May be a calcium-dependent lectin. In Thrasops jacksonii (Jackson's black tree snake), this protein is C-type lectin lectoxin-Thr1.